Here is a 414-residue protein sequence, read N- to C-terminus: Na(+)-translocating NADH-quinone reductase subunit B (414 aa).

3 helical membrane passes run 56–76 (IMIMVWFAVFPAMFWGMYNAG), 129–149 (FLPIYATVFLVGGFWEVLFCM), and 164–184 (ILFALIVPPTLPLWQAALGIT). T236 is subject to FMN phosphoryl threonine. 5 consecutive transmembrane segments (helical) span residues 268-288 (IPGSIGEVSTLALMIGAAMIV), 297-317 (IIAGVMIGMIAVSTLFNVIGS), 325-345 (MPWHWHLVLGGFAFGMFFMAT), 358-378 (WWYGILIGAMCVMIRVVNPAY), and 381-401 (GMMLAILFANLFAPLFDHVVI).

This sequence belongs to the NqrB/RnfD family. Composed of six subunits; NqrA, NqrB, NqrC, NqrD, NqrE and NqrF. FMN serves as cofactor.

The protein localises to the cell inner membrane. The enzyme catalyses a ubiquinone + n Na(+)(in) + NADH + H(+) = a ubiquinol + n Na(+)(out) + NAD(+). With respect to regulation, this reaction is tightly coupled to the Na(+) pumping activity and specifically requires Na(+) for activity. Inhibited by korormicin and 2-N-heptyl-4-hydroxyquinoline N-oxide (HQNO). In terms of biological role, NQR complex catalyzes the reduction of ubiquinone-1 to ubiquinol by two successive reactions, coupled with the transport of Na(+) ions from the cytoplasm to the periplasm. NqrA to NqrE are probably involved in the second step, the conversion of ubisemiquinone to ubiquinol. The sequence is that of Na(+)-translocating NADH-quinone reductase subunit B from Vibrio alginolyticus.